A 479-amino-acid polypeptide reads, in one-letter code: RAC-gamma serine/threonine-protein kinase (479 aa).

An N-acetylserine modification is found at S2. The PH domain maps to 5–107; the sequence is TIVKEGWVQK…WTEAIQAVAD (103 aa). The cysteines at positions 59 and 76 are disulfide-linked. Residues 148-405 enclose the Protein kinase domain; the sequence is FDYLKLLGKG…AKEIMRHSFF (258 aa). ATP is bound by residues 154 to 162 and K177; that span reads LGKGTFGKV. The Proton acceptor role is filled by D271. C293 and C307 are joined by a disulfide. O-linked (GlcNAc) threonine glycosylation is present at T302. The residue at position 305 (T305) is a Phosphothreonine; by PDPK1. T309 carries O-linked (GlcNAc) threonine glycosylation. The region spanning 406–479 is the AGC-kinase C-terminal domain; that stretch reads SGVNWQDVYD…QFSYSASGRE (74 aa). The residue at position 447 (T447) is a Phosphothreonine. Residues 458-479 form a disordered region; the sequence is DCMDNERRPHFPQFSYSASGRE. The residue at position 472 (S472) is a Phosphoserine; by PKC/PRKCZ. Residue S472 is glycosylated (O-linked (GlcNAc) serine; alternate).

The protein belongs to the protein kinase superfamily. AGC Ser/Thr protein kinase family. RAC subfamily. As to quaternary structure, interacts (via PH domain) with TCL1A; this enhances AKT3 phosphorylation and activation. Interacts with TRAF6. Interacts with KCTD20. Interacts with BTBD10. Phosphorylation on Thr-305 and Ser-472 is required for full activity. Phosphorylation of the activation loop at Thr-305 by PDPK1/PDK1 is a prerequisite for full activation. Phosphorylation at Ser-472 by mTORC2 in response to growth factors plays a key role in AKT1 activation by facilitating subsequent phosphorylation of the activation loop by PDPK1/PDK1. Post-translationally, ubiquitinated. When fully phosphorylated and translocated into the nucleus, undergoes 'Lys-48'-polyubiquitination catalyzed by TTC3, leading to its degradation by the proteasome. In terms of processing, O-GlcNAcylation at Thr-302 and Thr-309 inhibits activating phosphorylation at Thr-305 via disrupting the interaction between AKT and PDPK1/PDK1. In terms of tissue distribution, in adult tissues, it is highly expressed in brain, lung and kidney, but weakly in heart, testis and liver. In fetal tissues, it is highly expressed in heart, liver and brain and not at all in kidney.

It is found in the nucleus. The protein resides in the cytoplasm. Its subcellular location is the membrane. It carries out the reaction L-seryl-[protein] + ATP = O-phospho-L-seryl-[protein] + ADP + H(+). The catalysed reaction is L-threonyl-[protein] + ATP = O-phospho-L-threonyl-[protein] + ADP + H(+). Its activity is regulated as follows. Two specific sites, one in the kinase domain (Thr-305) and the other in the C-terminal regulatory region (Ser-472), need to be phosphorylated for its full activation. IGF-1 leads to the activation of AKT3, which may play a role in regulating cell survival. AKT3 is one of 3 closely related serine/threonine-protein kinases (AKT1, AKT2 and AKT3) called the AKT kinase, and which regulate many processes including metabolism, proliferation, cell survival, growth and angiogenesis. This is mediated through serine and/or threonine phosphorylation of a range of downstream substrates. Over 100 substrate candidates have been reported so far, but for most of them, no isoform specificity has been reported. AKT3 is the least studied AKT isoform. It plays an important role in brain development and is crucial for the viability of malignant glioma cells. AKT3 isoform may also be the key molecule in up-regulation and down-regulation of MMP13 via IL13. Required for the coordination of mitochondrial biogenesis with growth factor-induced increases in cellular energy demands. Down-regulation by RNA interference reduces the expression of the phosphorylated form of BAD, resulting in the induction of caspase-dependent apoptosis. The sequence is that of RAC-gamma serine/threonine-protein kinase (AKT3) from Homo sapiens (Human).